A 1058-amino-acid polypeptide reads, in one-letter code: MLTRIRNAGVGGNAARRVRLLAGYTGARMAHAAALNSTTGAGGAARAAGAGRRAHSDVHVWALRQQSGIHRGGQCILKQDREPDQSDDKKVPPRAEEGRDEEAVRDEEAERQPREEQANRSSEASSSRGSGGSASSAGGGGRSNPPSEGEVPRKYEELMVLPMSNRPLFPGYYKSVTVYDPAVIEAICGLLRRNIPYLGAFLLKDRSMDKDSIDSIEEVHRVGVFAQITSVHHGVDVDGRKAMSMVLYPHRRVQLDELVSTPKLVAEAKEKATDDGLVQAKKEKFRDMSEGGEEEENPTEFLLETGVTVGNFSDHLDLPVDHSSVMLNALTSETLNTFKHLSSINATVKQQLIALSSITTSLKPNIFESPSLLADFAAAISVGDPNELQDVLETRDVEQRLEKALVFIKKEVYVAELQQKIEKETDAKVQKRYKDQVLTEQMRGIKKEMGVEDAKDKAIATFRERAEKLKFPEHVKKIFDEELARLSGLESAMSEYSVTKNYLDWITSLPWGIASTDQYSILSARKVLDNDHYGMQDVKDRILEFIAVGKLKGQIDGKIICLVGPPGVGKTSIGQSISRALNRTFFRFSVGGMSDVSEIKGHRRTYIGALPGRLIHALKRCQTENPLILIDEIDKLGRTGHQGDPASALLELLDPEQNKTFLDTYLDFPVDMSKVLFVCTANTLDTIPRPLLDRMEVIELSGYVADEKVKIAERHLIPAAKKSTGLGSANINLTSDSIVALLKNYCRESGVRSLKKHIEKIYRKAALKIVQQLSIDDTPKSAPAETNIEPENGKPDASAKPLTNNLPAPEPLNIPDSVKIDITPETLVEYLGPPVFTADRIYEKTPAGVVMGLAYTYLGGCTMYVESVLGQPLSKDSNPSLEHTGQLGDVMKESSRLAYSFSKMFMSRRFPNNRFFEKAAIHLHCPEGATPKDGPSAGITMASSLLSLAMNKPLDPTIAMTGELTLTGKVLRIGGIKEKTVAAKRSGAKTIIFPKDNMADWEDLPAHVKEGLIPVAAEWYDDVFNVLFGSVTEEEGNNVWKDQFDLIERSKATASSSN.

The transit peptide at 1–47 directs the protein to the mitochondrion; the sequence is MLTRIRNAGVGGNAARRVRLLAGYTGARMAHAAALNSTTGAGGAARA. Residues 72-151 form a disordered region; sequence GGQCILKQDR…RSNPPSEGEV (80 aa). Composition is skewed to basic and acidic residues over residues 78-97 and 106-118; these read KQDREPDQSDDKKVPPRAEE and DEEAERQPREEQA. Over residues 129–142 the composition is skewed to gly residues; the sequence is GSGGSASSAGGGGR. The Lon N-terminal domain maps to 158 to 412; the sequence is LMVLPMSNRP…KALVFIKKEV (255 aa). 564 to 571 contacts ATP; it reads GPPGVGKT. The segment at 778–814 is disordered; it reads TPKSAPAETNIEPENGKPDASAKPLTNNLPAPEPLNI. The 187-residue stretch at 844–1030 folds into the Lon proteolytic domain; the sequence is KTPAGVVMGL…DDVFNVLFGS (187 aa). Active-site residues include Ser936 and Lys979.

This sequence belongs to the peptidase S16 family. Homohexamer or homoheptamer. Organized in a ring with a central cavity.

It is found in the mitochondrion matrix. The enzyme catalyses Hydrolysis of proteins in presence of ATP.. ATP-dependent serine protease that mediates the selective degradation of misfolded, unassembled or oxidatively damaged polypeptides as well as certain short-lived regulatory proteins in the mitochondrial matrix. May also have a chaperone function in the assembly of inner membrane protein complexes. Participates in the regulation of mitochondrial gene expression and in the maintenance of the integrity of the mitochondrial genome. Binds to mitochondrial DNA in a site-specific manner. This Eremothecium gossypii (strain ATCC 10895 / CBS 109.51 / FGSC 9923 / NRRL Y-1056) (Yeast) protein is Lon protease homolog, mitochondrial.